We begin with the raw amino-acid sequence, 150 residues long: Heat shock protein beta-3 (150 aa).

The region spanning K47–K150 is the sHSP domain.

The protein belongs to the small heat shock protein (HSP20) family.

It localises to the cytoplasm. Its subcellular location is the nucleus. Inhibitor of actin polymerization. This chain is Heat shock protein beta-3 (HSPB3), found in Homo sapiens (Human).